The following is a 1704-amino-acid chain: Vitellogenin-1 (1704 aa).

The N-terminal stretch at 1–14 is a signal peptide; it reads MKAVVLALTLAFVA. The region spanning 22–660 is the Vitellogenin domain; that stretch reads FAAGKTYVYK…DAATFMPKSF (639 aa). N-linked (GlcNAc...) asparagine glycans are attached at residues N446, N635, N903, N908, N1019, N1054, N1080, N1121, N1174, N1285, N1322, N1375, N1379, N1405, N1456, and N1512. The span at 1078 to 1109 shows a compositional bias: low complexity; sequence RRNSSSSSSSSSSSSSESRSSRSSSSSSSSSR. The segment at 1078–1213 is disordered; sequence RRNSSSSSSS…SSDRRSKEVM (136 aa). Residues 1122–1204 are compositionally biased toward low complexity; that stretch reads SSSSSSSRRS…FSDSSSSSSS (83 aa). Positions 1442 to 1617 constitute a VWFD domain; sequence AECSFVEDTL…SWILPAESCR (176 aa). Disulfide bonds link C1444–C1580 and C1467–C1616.

Phosvitin, an egg yolk storage protein, is one of the most highly phosphorylated (10%) proteins in nature. In terms of processing, the N-terminal of the blood vitellogenin is blocked. As to expression, produced by the liver, secreted into the blood and then sequestered by receptor mediated endocytosis into growing oocytes, where it is generally cleaved, giving rise to the respective yolk components composed of complex suite of small cleavage products.

Its function is as follows. Precursor of the major egg-yolk proteins that are sources of nutrients during early development of oviparous organisms. This is Vitellogenin-1 (vtg1) from Fundulus heteroclitus (Killifish).